Reading from the N-terminus, the 313-residue chain is tRNA dimethylallyltransferase (313 aa).

11–18 (GPTAAGKS) provides a ligand contact to ATP. 13-18 (TAAGKS) contacts substrate. Interaction with substrate tRNA stretches follow at residues 36-39 (DSAT), 160-164 (QRIQR), and 244-249 (RCVGYR).

Belongs to the IPP transferase family. As to quaternary structure, monomer. Mg(2+) is required as a cofactor.

The enzyme catalyses adenosine(37) in tRNA + dimethylallyl diphosphate = N(6)-dimethylallyladenosine(37) in tRNA + diphosphate. In terms of biological role, catalyzes the transfer of a dimethylallyl group onto the adenine at position 37 in tRNAs that read codons beginning with uridine, leading to the formation of N6-(dimethylallyl)adenosine (i(6)A). The chain is tRNA dimethylallyltransferase from Bordetella parapertussis (strain 12822 / ATCC BAA-587 / NCTC 13253).